Reading from the N-terminus, the 793-residue chain is MASRNQNRPPRSPNAKKEGLGGISFDKRRKVETQGGTGRRQAFSAVNKQDVTMNSDVGSIEECGKVDFTKDEILALLSERAKAGKFDTKAKIEQMTDIIKRLKVCVKWFQQADETHVQEKENLKVSLESSEQKYNHKELEARTKEEELQATISKLEENVVSLHEKLAKEESSTQDAIECHRREKEARVAAEKVQASLGEELDKVKEEKMAAKQKVTSLEDMYKRLQEYNTSLQQYNSKLQTDLETVRAALTRAEKEKSSILENLSTLRGHSKSLQDQLSSSRVLQDDAIKQKDSLLSEVTNLRNELQQVRDDRDRQVVQSQKLSEEIRKYQENVGKSSQELDILTAKSGSLEETCSLQKERLNMLEQQLAIANERQKMADASVSLTRTEFEEQKHLLCELQDRLADMEHQLCEGELLRKKLHNTILELKGNIRVFCRVRPLLPDDGGRHEATVIAYPTSTEAQGRGVDLVQSGNKHPFTFDKVFNHEASQEEVFFEISQLVQSALDGYKVCIFAYGQTGSGKTYTMMGRPEAPDQKGLIPRSLEQIFQASQSLGAQGWKYKMQVSMLEIYNETIRDLLSTNRTTSMDLVRADSGTSGKQYTITHDVNGHTHVSDLTIFDVCSVGKISSLLQQAAQSRSVGKTQMNEQSSRSHFVFTMRISGVNESTEQQVQGVLNLIDLAGSERLSKSGATGDRLKETQAINKSLSALSDVIFALAKKEDHVPFRNSKLTYLLQPCLGGDSKTLMFVNISPDPTSAGESLCSLRFAARVNACEIGIPRRQTSTKLLDSRLSYG.

Residues 1-43 (MASRNQNRPPRSPNAKKEGLGGISFDKRRKVETQGGTGRRQAF) are disordered. Residues 1–69 (MASRNQNRPP…IEECGKVDFT (69 aa)) are globular. The span at 15–32 (AKKEGLGGISFDKRRKVE) shows a compositional bias: basic and acidic residues. The stretch at 120 to 375 (KENLKVSLES…EQQLAIANER (256 aa)) forms a coiled coil. Positions 431-772 (NIRVFCRVRP…LRFAARVNAC (342 aa)) constitute a Kinesin motor domain. An ATP-binding site is contributed by 516-523 (GQTGSGKT).

It belongs to the TRAFAC class myosin-kinesin ATPase superfamily. Kinesin family. KIN-14 subfamily.

The protein resides in the cytoplasm. Its subcellular location is the cytoskeleton. It localises to the spindle. The protein localises to the phragmoplast. It is found in the chromosome. The protein resides in the centromere. Its subcellular location is the kinetochore. Kinesin that supports microtubule movement in an ATP-dependent manner and has a minus-end directed polarity. Plays a crucial role in spindle morphogenesis in male meiosis. In mitosis, is required for normal microtubule accumulation at the spindle poles during prophase and may play a role in spindle assembly during prometaphase. This is Kinesin-like protein KIN-14C from Arabidopsis thaliana (Mouse-ear cress).